A 930-amino-acid polypeptide reads, in one-letter code: RNA-binding protein 10 (930 aa).

Basic and acidic residues-rich tracts occupy residues 1 to 14 and 21 to 45; these read MEYERRGGRGDRTG and RSQDDGGENRSRDHDYRDMDYRSYP. The tract at residues 1-127 is disordered; sequence MEYERRGGRG…EEDEEEEEKA (127 aa). The residue at position 2 (E2) is an N-acetylserine. Residues R30, S61, and S89 each carry the phosphoserine modification. A compositionally biased stretch (acidic residues) spans 59–70; it reads DSSEEQSAEDSY. A compositionally biased stretch (basic residues) spans 80 to 89; the sequence is RRRRRRHRHS. Positions 98-111 are enriched in basic and acidic residues; sequence RDGDYRDQDYRTEQ. Positions 112 to 125 are enriched in acidic residues; sequence GEEEEEEEDEEEEE. One can recognise an RRM 1 domain in the interval 129-209; that stretch reads NIVMLRMLPQ…QKVSMHYSDP (81 aa). The segment at 212-242 adopts a RanBP2-type zinc-finger fold; the sequence is KINEDWLCNKCGVQNFKRREKCFKCGVPKSE. In terms of domain architecture, RRM 2 spans 300–384; the sequence is DTIILRNLNP…KTINVEFAKG (85 aa). K383 bears the N6-acetyllysine mark. 4 disordered regions span residues 466–524, 537–569, 620–685, and 700–753; these read PGIT…AANS, SELQSPTHPSSALPPATSPTAQESYSQYPVPDV, EQSA…DERR, and KGAL…EEKL. The segment covering 508–524 has biased composition (polar residues); that stretch reads YQQSAEASSSQGTAANS. Positions 541–557 are enriched in low complexity; the sequence is SPTHPSSALPPATSPTA. Basic and acidic residues-rich tracts occupy residues 623–639, 653–669, and 700–709; these read ADGHKETGAPSKEGKEK, KDMERWARSLNKQKENF, and KGALAERQHT. A phosphoserine mark is found at S718, S723, S733, S736, and S738. The span at 743 to 753 shows a compositional bias: basic and acidic residues; the sequence is ERGGPEREEKL. The C2H2-type; atypical zinc-finger motif lies at 759-784; that stretch reads LACLLCRRQFPSKEALIRHQQLSGLH. Residues S781 and S797 each carry the phosphoserine modification. The span at 815–826 shows a compositional bias: basic and acidic residues; sequence RDRAAERREKYG. The interval 815–861 is disordered; sequence RDRAAERREKYGIPEPPEPKRRKYGGISTASVDFEQPTRDGLGSDNI. S845 carries the phosphoserine modification. The 47-residue stretch at 858–904 folds into the G-patch domain; it reads SDNIGSRMLQAMGWKEGSGLGRKKQGIVTPIEAQTRVRGSGLGARGS. Omega-N-methylarginine is present on R902.

Associates with the spliceosome. Component of a large chromatin remodeling complex, at least composed of MYSM1, PCAF, RBM10 and KIF11/TRIP5.

The protein resides in the nucleus. Its function is as follows. Binds to ssRNA containing the consensus sequence 5'-AGGUAA-3'. May be involved in post-transcriptional processing, most probably in mRNA splicing. Binds to RNA homopolymers, with a preference for poly(G) and poly(U) and little for poly(A). May bind to specific miRNA hairpins. The protein is RNA-binding protein 10 of Homo sapiens (Human).